Here is a 303-residue protein sequence, read N- to C-terminus: Vesicle-trafficking protein SEC22c (303 aa).

The Cytoplasmic segment spans residues 1–183 (MSVIFFACVV…EPAPNFRMEP (183 aa)). A Longin domain is found at 8-119 (CVVRVRDGLP…YAFLEFDSII (112 aa)). A helical membrane pass occupies residues 184 to 204 (VTALGILSLILNIMCAALNLI). The Lumenal portion of the chain corresponds to 205–223 (RGVHLAEHSLQVAHEEIGN). Residues 224 to 244 (ILAFLVPFVACIFQCYLYLFY) form a helical membrane-spanning segment. The Cytoplasmic portion of the chain corresponds to 245–248 (SPAR). A helical transmembrane segment spans residues 249 to 269 (TMKVVLMLLFICLGNMYLHGL). R270 is a topological domain (lumenal). Residues 271–291 (NLWQILFHIGVAFLSSYQILT) traverse the membrane as a helical segment. The Cytoplasmic portion of the chain corresponds to 292-303 (RQLQEKQSDCGV).

Belongs to the synaptobrevin family. In terms of tissue distribution, ubiquitously expressed.

The protein localises to the endoplasmic reticulum membrane. May be involved in vesicle transport between the ER and the Golgi complex. In Homo sapiens (Human), this protein is Vesicle-trafficking protein SEC22c (SEC22C).